Consider the following 326-residue polypeptide: RNA/RNP complex-1-interacting phosphatase (326 aa).

The interval 1 to 28 (MNQWHYGRYSRGRDFTARAPPKKKGKNQ) is disordered. In terms of domain architecture, Tyrosine-protein phosphatase spans 59–206 (FEAKLMPEEC…LQKRRVRKNQ (148 aa)). The active-site Phosphocysteine intermediate is Cys-150. 151-156 (THGLNR) serves as a coordination point for substrate. Arg-156 acts as the Proton donor/acceptor in catalysis. Positions 200–258 (RRVRKNQNASASRSGGLEDSAHLTEQVHTTNKPVNKGPKKSRRGGHLESSQHVQTQSSA) are disordered. Residues 247–258 (ESSQHVQTQSSA) show a composition bias toward polar residues.

This sequence belongs to the protein-tyrosine phosphatase family. Non-receptor class dual specificity subfamily. In terms of assembly, monomer. May interact with SFRS7 and SFRS9/SRP30C.

It is found in the nucleus. Its subcellular location is the nucleus speckle. Its function is as follows. Possesses RNA 5'-triphosphatase and diphosphatase activities, but displays a poor protein-tyrosine phosphatase activity. In addition, has phosphatase activity with ATP, ADP and O-methylfluorescein phosphate (in vitro). Binds to RNA. May participate in nuclear mRNA metabolism. In Rattus norvegicus (Rat), this protein is RNA/RNP complex-1-interacting phosphatase (Dusp11).